The primary structure comprises 137 residues: Small ribosomal subunit protein uS12 (137 aa).

Aspartate 102 is subject to 3-methylthioaspartic acid.

This sequence belongs to the universal ribosomal protein uS12 family. As to quaternary structure, part of the 30S ribosomal subunit. Contacts proteins S8 and S17. May interact with IF1 in the 30S initiation complex.

Functionally, with S4 and S5 plays an important role in translational accuracy. Interacts with and stabilizes bases of the 16S rRNA that are involved in tRNA selection in the A site and with the mRNA backbone. Located at the interface of the 30S and 50S subunits, it traverses the body of the 30S subunit contacting proteins on the other side and probably holding the rRNA structure together. The combined cluster of proteins S8, S12 and S17 appears to hold together the shoulder and platform of the 30S subunit. The chain is Small ribosomal subunit protein uS12 from Mesoplasma florum (strain ATCC 33453 / NBRC 100688 / NCTC 11704 / L1) (Acholeplasma florum).